A 72-amino-acid chain; its full sequence is Toxin Acra II-3 (72 aa).

Residues 4–67 (PGNYPLDTRG…VWNAAKNYCK (64 aa)) enclose the LCN-type CS-alpha/beta domain. 3 disulfides stabilise this stretch: Cys-18–Cys-41, Cys-27–Cys-46, and Cys-31–Cys-48.

Belongs to the long (3 C-C) scorpion toxin superfamily. Sodium channel inhibitor family. Beta subfamily. In terms of tissue distribution, expressed by the venom gland.

The protein localises to the secreted. Its function is as follows. Binds to sodium channels (Nav) and affects the channel activation process. In Androctonus crassicauda (Arabian fat-tailed scorpion), this protein is Toxin Acra II-3.